The primary structure comprises 1243 residues: Tau-tubulin kinase 2 (1243 aa).

Residues 21–284 (WKVLRKIGGG…LLTSVFDNSI (264 aa)) form the Protein kinase domain. Residues 27 to 35 (IGGGGFGEI) and Lys-50 each bind ATP. Residue Asp-141 is the Proton acceptor of the active site. Ser-445 carries the post-translational modification Phosphoserine. The segment covering 674-683 (VASTQSTSGS) has biased composition (polar residues). Disordered stretches follow at residues 674–695 (VAST…KKDL) and 737–761 (TGHD…DPPD). Ser-786 is subject to Phosphoserine. Residues 1063-1086 (QINGSASPQFLPRPPPGKPPVRPG) form a disordered region. Residues 1073–1084 (LPRPPPGKPPVR) are compositionally biased toward pro residues. Ser-1102 carries the post-translational modification Phosphoserine. A compositionally biased stretch (polar residues) spans 1115–1129 (QNGSQKSRSTTQCKS). Residues 1115 to 1243 (QNGSQKSRST…KSKPASKLSR (129 aa)) form a disordered region. Low complexity-rich tracts occupy residues 1144–1170 (VVPR…PSRA), 1187–1202 (SKSP…SRRS), and 1227–1243 (SSKT…KLSR).

This sequence belongs to the protein kinase superfamily. CK1 Ser/Thr protein kinase family. As to quaternary structure, interacts with CEP164. Interacts with MCRS1; the interaction is required for recruitment of TTBK2 to the mother centriole.

The protein resides in the cell projection. It localises to the cilium. The protein localises to the cytoplasm. It is found in the cytoskeleton. Its subcellular location is the cilium basal body. The protein resides in the microtubule organizing center. It localises to the centrosome. The protein localises to the centriole. It is found in the cytosol. Its subcellular location is the nucleus. It carries out the reaction L-seryl-[protein] + ATP = O-phospho-L-seryl-[protein] + ADP + H(+). The catalysed reaction is L-threonyl-[protein] + ATP = O-phospho-L-threonyl-[protein] + ADP + H(+). In terms of biological role, serine/threonine kinase that acts as a key regulator of ciliogenesis: controls the initiation of ciliogenesis by binding to the distal end of the basal body and promoting the removal of CCP110, which caps the mother centriole, leading to the recruitment of IFT proteins, which build the ciliary axoneme. Has some substrate preference for proteins that are already phosphorylated on a Tyr residue at the +2 position relative to the phosphorylation site. Able to phosphorylate tau on serines in vitro. Phosphorylates MPHOSPH9 which promotes its ubiquitination and proteasomal degradation, loss of MPHOSPH9 facilitates the removal of the CP110-CEP97 complex (a negative regulator of ciliogenesis) from the mother centrioles, promoting the initiation of ciliogenesis. Required for recruitment of CPLANE2 and INTU to the mother centriole. The protein is Tau-tubulin kinase 2 (Ttbk2) of Mus musculus (Mouse).